A 714-amino-acid polypeptide reads, in one-letter code: Fatty acid oxidation complex subunit alpha (714 aa).

The tract at residues 1 to 190 is enoyl-CoA hydratase; it reads MEMASAFTLN…KLGLVDDVVP (190 aa). A 3-hydroxyacyl-CoA dehydrogenase region spans residues 306–714; sequence APLNSVGILG…FWKTTATDLQ (409 aa).

In the N-terminal section; belongs to the enoyl-CoA hydratase/isomerase family. This sequence in the central section; belongs to the 3-hydroxyacyl-CoA dehydrogenase family. In terms of assembly, heterotetramer of two alpha chains (FadJ) and two beta chains (FadI).

It is found in the cytoplasm. The catalysed reaction is a (3S)-3-hydroxyacyl-CoA = a (2E)-enoyl-CoA + H2O. The enzyme catalyses a 4-saturated-(3S)-3-hydroxyacyl-CoA = a (3E)-enoyl-CoA + H2O. It catalyses the reaction a (3S)-3-hydroxyacyl-CoA + NAD(+) = a 3-oxoacyl-CoA + NADH + H(+). It carries out the reaction (3S)-3-hydroxybutanoyl-CoA = (3R)-3-hydroxybutanoyl-CoA. It functions in the pathway lipid metabolism; fatty acid beta-oxidation. Its function is as follows. Catalyzes the formation of a hydroxyacyl-CoA by addition of water on enoyl-CoA. Also exhibits 3-hydroxyacyl-CoA epimerase and 3-hydroxyacyl-CoA dehydrogenase activities. In Escherichia coli (strain ATCC 8739 / DSM 1576 / NBRC 3972 / NCIMB 8545 / WDCM 00012 / Crooks), this protein is Fatty acid oxidation complex subunit alpha.